The chain runs to 167 residues: Ribosome maturation factor RimM (167 aa).

The PRC barrel domain occupies 94-165 (ENEFYYSDII…KIIITPMEGL (72 aa)).

Belongs to the RimM family. In terms of assembly, binds ribosomal protein uS19.

Its subcellular location is the cytoplasm. In terms of biological role, an accessory protein needed during the final step in the assembly of 30S ribosomal subunit, possibly for assembly of the head region. Essential for efficient processing of 16S rRNA. May be needed both before and after RbfA during the maturation of 16S rRNA. It has affinity for free ribosomal 30S subunits but not for 70S ribosomes. The polypeptide is Ribosome maturation factor RimM (Staphylococcus aureus (strain Mu3 / ATCC 700698)).